The sequence spans 358 residues: Photosystem II protein D1 (358 aa).

Helical transmembrane passes span 28 to 45, 117 to 132, and 141 to 155; these read YVGW…AAAI, HFLI…QWEL, and WICV…AAFA. Chlorophyll a is bound at residue histidine 117. Tryptophan 125 lines the pheophytin a pocket. Residues aspartate 169 and glutamate 188 each contribute to the [CaMn4O5] cluster site. A helical membrane pass occupies residues 196 to 217; sequence FHMIGVAGMFGGSLFSAMHGSL. Histidine 197 is a binding site for chlorophyll a. A quinone is bound by residues histidine 214 and 263 to 264; that span reads SF. A Fe cation-binding site is contributed by histidine 214. Histidine 271 is a Fe cation binding site. Residues 273-287 traverse the membrane as a helical segment; sequence FLAAWPVICIWITSL. [CaMn4O5] cluster is bound by residues histidine 331, glutamate 332, aspartate 341, and alanine 343. Positions 344–358 are excised as a propeptide; that stretch reads AAESTPVALIAPAIG.

This sequence belongs to the reaction center PufL/M/PsbA/D family. PSII is composed of 1 copy each of membrane proteins PsbA, PsbB, PsbC, PsbD, PsbE, PsbF, PsbH, PsbI, PsbJ, PsbK, PsbL, PsbM, PsbT, PsbX, PsbY, Psb30/Ycf12, peripheral proteins PsbO, CyanoQ (PsbQ), PsbU, PsbV and a large number of cofactors. It forms dimeric complexes. The cofactor is The D1/D2 heterodimer binds P680, chlorophylls that are the primary electron donor of PSII, and subsequent electron acceptors. It shares a non-heme iron and each subunit binds pheophytin, quinone, additional chlorophylls, carotenoids and lipids. D1 provides most of the ligands for the Mn4-Ca-O5 cluster of the oxygen-evolving complex (OEC). There is also a Cl(-1) ion associated with D1 and D2, which is required for oxygen evolution. The PSII complex binds additional chlorophylls, carotenoids and specific lipids.. Post-translationally, tyr-160 forms a radical intermediate that is referred to as redox-active TyrZ, YZ or Y-Z. In terms of processing, C-terminally processed by CtpA; processing is essential to allow assembly of the oxygen-evolving complex and thus photosynthetic growth.

The protein localises to the cellular thylakoid membrane. It carries out the reaction 2 a plastoquinone + 4 hnu + 2 H2O = 2 a plastoquinol + O2. In terms of biological role, photosystem II (PSII) is a light-driven water:plastoquinone oxidoreductase that uses light energy to abstract electrons from H(2)O, generating O(2) and a proton gradient subsequently used for ATP formation. It consists of a core antenna complex that captures photons, and an electron transfer chain that converts photonic excitation into a charge separation. The D1/D2 (PsbA/PsbD) reaction center heterodimer binds P680, the primary electron donor of PSII as well as several subsequent electron acceptors. The sequence is that of Photosystem II protein D1 from Prochlorococcus marinus (strain MIT 9303).